We begin with the raw amino-acid sequence, 321 residues long: Glycerol-3-phosphate dehydrogenase [NAD(P)+] (321 aa).

Residues W15, R35, and K101 each coordinate NADPH. Residues K101 and G129 each coordinate sn-glycerol 3-phosphate. Position 133 (A133) interacts with NADPH. Residues K184, D237, S247, R248, and N249 each coordinate sn-glycerol 3-phosphate. Residue K184 is the Proton acceptor of the active site. An NADPH-binding site is contributed by R248. V268 and E270 together coordinate NADPH.

Belongs to the NAD-dependent glycerol-3-phosphate dehydrogenase family.

Its subcellular location is the cytoplasm. It catalyses the reaction sn-glycerol 3-phosphate + NAD(+) = dihydroxyacetone phosphate + NADH + H(+). The enzyme catalyses sn-glycerol 3-phosphate + NADP(+) = dihydroxyacetone phosphate + NADPH + H(+). It functions in the pathway membrane lipid metabolism; glycerophospholipid metabolism. In terms of biological role, catalyzes the reduction of the glycolytic intermediate dihydroxyacetone phosphate (DHAP) to sn-glycerol 3-phosphate (G3P), the key precursor for phospholipid synthesis. The polypeptide is Glycerol-3-phosphate dehydrogenase [NAD(P)+] (Acidiphilium cryptum (strain JF-5)).